We begin with the raw amino-acid sequence, 504 residues long: 2,3-bisphosphoglycerate-independent phosphoglycerate mutase (504 aa).

The Mn(2+) site is built by Asp-11 and Ser-61. Ser-61 serves as the catalytic Phosphoserine intermediate. Substrate-binding positions include His-122, 152 to 153 (RD), Arg-183, Arg-189, 255 to 258 (RNDR), and Lys-329. Residues Asp-396, His-400, Asp-437, His-438, and His-455 each contribute to the Mn(2+) site.

It belongs to the BPG-independent phosphoglycerate mutase family. Monomer. The cofactor is Mn(2+).

The catalysed reaction is (2R)-2-phosphoglycerate = (2R)-3-phosphoglycerate. Its pathway is carbohydrate degradation; glycolysis; pyruvate from D-glyceraldehyde 3-phosphate: step 3/5. Functionally, catalyzes the interconversion of 2-phosphoglycerate and 3-phosphoglycerate. This chain is 2,3-bisphosphoglycerate-independent phosphoglycerate mutase, found in Bacteroides fragilis (strain ATCC 25285 / DSM 2151 / CCUG 4856 / JCM 11019 / LMG 10263 / NCTC 9343 / Onslow / VPI 2553 / EN-2).